A 448-amino-acid polypeptide reads, in one-letter code: tRNA modification GTPase MnmE (448 aa).

Residues arginine 24, glutamate 81, and lysine 120 each contribute to the (6S)-5-formyl-5,6,7,8-tetrahydrofolate site. The region spanning 216-373 (GLNVVLVGAP…LKRTLLREAG (158 aa)) is the TrmE-type G domain. Asparagine 226 lines the K(+) pocket. Residues 226–231 (NVGKSS), 245–251 (TDIAGTT), and 270–273 (DTAG) each bind GTP. A Mg(2+)-binding site is contributed by serine 230. Residues threonine 245, isoleucine 247, and threonine 250 each contribute to the K(+) site. Threonine 251 lines the Mg(2+) pocket. Residue lysine 448 participates in (6S)-5-formyl-5,6,7,8-tetrahydrofolate binding.

This sequence belongs to the TRAFAC class TrmE-Era-EngA-EngB-Septin-like GTPase superfamily. TrmE GTPase family. Homodimer. Heterotetramer of two MnmE and two MnmG subunits. K(+) is required as a cofactor.

The protein localises to the cytoplasm. Its function is as follows. Exhibits a very high intrinsic GTPase hydrolysis rate. Involved in the addition of a carboxymethylaminomethyl (cmnm) group at the wobble position (U34) of certain tRNAs, forming tRNA-cmnm(5)s(2)U34. This chain is tRNA modification GTPase MnmE, found in Neisseria meningitidis serogroup B (strain ATCC BAA-335 / MC58).